A 549-amino-acid chain; its full sequence is Arginine--tRNA ligase (549 aa).

The 'HIGH' region motif lies at 122–132 (ANPTGFLHLGH).

The protein belongs to the class-I aminoacyl-tRNA synthetase family. Monomer.

The protein resides in the cytoplasm. It carries out the reaction tRNA(Arg) + L-arginine + ATP = L-arginyl-tRNA(Arg) + AMP + diphosphate. The polypeptide is Arginine--tRNA ligase (Mycoplasmoides gallisepticum (strain R(low / passage 15 / clone 2)) (Mycoplasma gallisepticum)).